Consider the following 354-residue polypeptide: Chorismate synthase (354 aa).

An NADP(+)-binding site is contributed by arginine 48. FMN-binding positions include 125–127 (RAS), glycine 277, 292–296 (KPIPS), and arginine 318.

Belongs to the chorismate synthase family. Homotetramer. The cofactor is FMNH2.

It catalyses the reaction 5-O-(1-carboxyvinyl)-3-phosphoshikimate = chorismate + phosphate. The protein operates within metabolic intermediate biosynthesis; chorismate biosynthesis; chorismate from D-erythrose 4-phosphate and phosphoenolpyruvate: step 7/7. In terms of biological role, catalyzes the anti-1,4-elimination of the C-3 phosphate and the C-6 proR hydrogen from 5-enolpyruvylshikimate-3-phosphate (EPSP) to yield chorismate, which is the branch point compound that serves as the starting substrate for the three terminal pathways of aromatic amino acid biosynthesis. This reaction introduces a second double bond into the aromatic ring system. The chain is Chorismate synthase from Nitratidesulfovibrio vulgaris (strain ATCC 29579 / DSM 644 / CCUG 34227 / NCIMB 8303 / VKM B-1760 / Hildenborough) (Desulfovibrio vulgaris).